Consider the following 888-residue polypeptide: Semaphorin-6B (888 aa).

An N-terminal signal peptide occupies residues 1-25 (MQTPRASPPRPALLLLLLLLGGAHG). The Extracellular portion of the chain corresponds to 26–603 (LFPEEPPPLS…VSVNLLVTSS (578 aa)). Residues 31 to 523 (PPPLSVAPRD…FPRCVVRVPV (493 aa)) enclose the Sema domain. Asparagine 74 carries N-linked (GlcNAc...) asparagine glycosylation. 2 disulfide bridges follow: cysteine 116–cysteine 126 and cysteine 144–cysteine 153. 3 N-linked (GlcNAc...) asparagine glycosylation sites follow: asparagine 155, asparagine 167, and asparagine 291. 2 disulfide bridges follow: cysteine 267/cysteine 378 and cysteine 292/cysteine 337. 3 N-linked (GlcNAc...) asparagine glycosylation sites follow: asparagine 386, asparagine 441, and asparagine 462. 4 disulfide bridges follow: cysteine 486-cysteine 517, cysteine 526-cysteine 544, cysteine 532-cysteine 578, and cysteine 536-cysteine 552. Residues 604 to 624 (VAAFVVGAVVSGFSVGWFVGL) traverse the membrane as a helical segment. Topologically, residues 625-888 (RERRELARRK…GADRTAPPVP (264 aa)) are cytoplasmic. Disordered regions lie at residues 651–679 (VSRL…PPEA), 695–742 (LQGG…HPLL), and 757–888 (RAPE…PPVP). Residues 661–674 (GPGGRGGGGGGGAG) show a composition bias toward gly residues. The residue at position 665 (arginine 665) is an Omega-N-methylarginine. The segment covering 706–717 (LLPTPEQTPLPQ) has biased composition (low complexity).

Belongs to the semaphorin family. (Microbial infection) Interacts with P.sordellii toxin TcsL; semaphorins SEMA6A and SEMA6B constitute the major host receptors for TcsL in the vascular endothelium. Expressed in the brain in GABAergic neurons.

Its subcellular location is the cell membrane. Its function is as follows. Functions as a cell surface repellent for mossy fibers of developing neurons in the hippocampus where it plays a role in axon guidance. May function through the PLXNA4 receptor expressed by mossy cell axons. Functionally, (Microbial infection) Acts as a receptor for P.sordellii toxin TcsL in the in the vascular endothelium. The chain is Semaphorin-6B (SEMA6B) from Homo sapiens (Human).